Reading from the N-terminus, the 55-residue chain is ATP synthase F(0) complex subunit 8 (55 aa).

A helical transmembrane segment spans residues 10–32; it reads FFIMLASWLTFSLIIQPKLLTFV.

This sequence belongs to the ATPase protein 8 family. In terms of assembly, component of the ATP synthase complex composed at least of ATP5F1A/subunit alpha, ATP5F1B/subunit beta, ATP5MC1/subunit c (homooctomer), MT-ATP6/subunit a, MT-ATP8/subunit 8, ATP5ME/subunit e, ATP5MF/subunit f, ATP5MG/subunit g, ATP5MK/subunit k, ATP5MJ/subunit j, ATP5F1C/subunit gamma, ATP5F1D/subunit delta, ATP5F1E/subunit epsilon, ATP5PF/subunit F6, ATP5PB/subunit b, ATP5PD/subunit d, ATP5PO/subunit OSCP. ATP synthase complex consists of a soluble F(1) head domain (subunits alpha(3) and beta(3)) - the catalytic core - and a membrane F(0) domain - the membrane proton channel (subunits c, a, 8, e, f, g, k and j). These two domains are linked by a central stalk (subunits gamma, delta, and epsilon) rotating inside the F1 region and a stationary peripheral stalk (subunits F6, b, d, and OSCP).

It localises to the mitochondrion membrane. Functionally, subunit 8, of the mitochondrial membrane ATP synthase complex (F(1)F(0) ATP synthase or Complex V) that produces ATP from ADP in the presence of a proton gradient across the membrane which is generated by electron transport complexes of the respiratory chain. ATP synthase complex consist of a soluble F(1) head domain - the catalytic core - and a membrane F(1) domain - the membrane proton channel. These two domains are linked by a central stalk rotating inside the F(1) region and a stationary peripheral stalk. During catalysis, ATP synthesis in the catalytic domain of F(1) is coupled via a rotary mechanism of the central stalk subunits to proton translocation. In vivo, can only synthesize ATP although its ATP hydrolase activity can be activated artificially in vitro. Part of the complex F(0) domain. The protein is ATP synthase F(0) complex subunit 8 of Loxigilla noctis (Lesser Antillean bullfinch).